We begin with the raw amino-acid sequence, 423 residues long: Glutamyl-tRNA reductase 2 (423 aa).

Substrate-binding positions include 48–51, Ser-103, 108–110, and Gln-114; these read TCYR and EPQ. The Nucleophile role is filled by Cys-49. NADP(+) is bound at residue 183–188; the sequence is GAGEMA.

Belongs to the glutamyl-tRNA reductase family. As to quaternary structure, homodimer.

It catalyses the reaction (S)-4-amino-5-oxopentanoate + tRNA(Glu) + NADP(+) = L-glutamyl-tRNA(Glu) + NADPH + H(+). It functions in the pathway porphyrin-containing compound metabolism; protoporphyrin-IX biosynthesis; 5-aminolevulinate from L-glutamyl-tRNA(Glu): step 1/2. Functionally, catalyzes the NADPH-dependent reduction of glutamyl-tRNA(Glu) to glutamate 1-semialdehyde (GSA). This is Glutamyl-tRNA reductase 2 from Anaeromyxobacter sp. (strain Fw109-5).